Consider the following 147-residue polypeptide: Nucleoside diphosphate kinase (147 aa).

ATP-binding residues include Lys9, Phe57, Arg85, Thr91, Arg102, and Asn112. The active-site Pros-phosphohistidine intermediate is the His115.

It belongs to the NDK family. In terms of assembly, homotetramer. The cofactor is Mg(2+).

It localises to the cytoplasm. It carries out the reaction a 2'-deoxyribonucleoside 5'-diphosphate + ATP = a 2'-deoxyribonucleoside 5'-triphosphate + ADP. It catalyses the reaction a ribonucleoside 5'-diphosphate + ATP = a ribonucleoside 5'-triphosphate + ADP. Its function is as follows. Major role in the synthesis of nucleoside triphosphates other than ATP. The ATP gamma phosphate is transferred to the NDP beta phosphate via a ping-pong mechanism, using a phosphorylated active-site intermediate. This Listeria monocytogenes serotype 4b (strain F2365) protein is Nucleoside diphosphate kinase.